Reading from the N-terminus, the 199-residue chain is Guanylate kinase (199 aa).

The Guanylate kinase-like domain occupies 20-198 (GKLIILTGPS…ALQAIEVALF (179 aa)). 27–34 (GPSGVGKG) is a binding site for ATP.

The protein belongs to the guanylate kinase family.

The protein resides in the cytoplasm. The enzyme catalyses GMP + ATP = GDP + ADP. In terms of biological role, essential for recycling GMP and indirectly, cGMP. This is Guanylate kinase from Nostoc sp. (strain PCC 7120 / SAG 25.82 / UTEX 2576).